A 208-amino-acid chain; its full sequence is 23 kDa protein (208 aa).

This chain is 23 kDa protein, found in Pea early browning virus.